Here is a 486-residue protein sequence, read N- to C-terminus: Cardiolipin synthase A (486 aa).

A run of 2 helical transmembrane segments spans residues 3–23 (TFYT…IAGV) and 38–58 (MAWL…YLSF). PLD phosphodiesterase domains follow at residues 219 to 246 (MDLR…VDPR) and 399 to 426 (KDGL…DMRS). Residues His-224, Lys-226, Asp-231, His-404, Lys-406, and Asp-411 contribute to the active site.

It belongs to the phospholipase D family. Cardiolipin synthase subfamily. ClsA sub-subfamily.

The protein resides in the cell inner membrane. It carries out the reaction 2 a 1,2-diacyl-sn-glycero-3-phospho-(1'-sn-glycerol) = a cardiolipin + glycerol. Its function is as follows. Catalyzes the reversible phosphatidyl group transfer from one phosphatidylglycerol molecule to another to form cardiolipin (CL) (diphosphatidylglycerol) and glycerol. This is Cardiolipin synthase A from Pectobacterium atrosepticum (strain SCRI 1043 / ATCC BAA-672) (Erwinia carotovora subsp. atroseptica).